The chain runs to 369 residues: C2 calcium-dependent domain-containing protein 4A (369 aa).

Disordered regions lie at residues 151 to 176 and 197 to 240; these read PRAP…ARRP and RSRR…PFPE. Residues 153-168 show a composition bias toward pro residues; that stretch reads APGPATPAAPGCPRPP. Residues 220–237 show a composition bias toward low complexity; sequence SQSPARAPSTSPPSSRVP. Positions 253–369 constitute a C2 domain; it reads AGDALRLAAE…ELSLGALLLL (117 aa).

The protein belongs to the C2CD4 family. In terms of tissue distribution, specifically expressed in endothelial cells.

It localises to the nucleus. May be involved in inflammatory process. May regulate cell architecture and adhesion. This Homo sapiens (Human) protein is C2 calcium-dependent domain-containing protein 4A (C2CD4A).